Here is a 125-residue protein sequence, read N- to C-terminus: Fluoride-specific ion channel FluC (125 aa).

The next 4 membrane-spanning stretches (helical) occupy residues 1-21, 32-52, 68-88, and 101-121; these read MIQAILVAFGGAIGSVLRYYV, AFPWGTLAVNVVGCFVIGVFA, LLITGFLGGFTTFSAFSLDAI, and IYIAASVGLSMAAVIAGLAVM. Residues glycine 75 and threonine 78 each coordinate Na(+).

This sequence belongs to the fluoride channel Fluc/FEX (TC 1.A.43) family.

It localises to the cell inner membrane. It catalyses the reaction fluoride(in) = fluoride(out). With respect to regulation, na(+) is not transported, but it plays an essential structural role and its presence is essential for fluoride channel function. Fluoride-specific ion channel. Important for reducing fluoride concentration in the cell, thus reducing its toxicity. In Rhizobium johnstonii (strain DSM 114642 / LMG 32736 / 3841) (Rhizobium leguminosarum bv. viciae), this protein is Fluoride-specific ion channel FluC.